A 279-amino-acid chain; its full sequence is uncharacterized protein (279 aa).

Residues 60-92 (RKANKLNNKQDSTFFNSASGETNNTILPPGVKN) are disordered. Residues 70-85 (DSTFFNSASGETNNTI) show a composition bias toward polar residues. The next 3 membrane-spanning stretches (helical) occupy residues 156 to 176 (IVGYTNLVIVAFFAGLLAVMN), 202 to 222 (ISIFVISIVTLPFWTMFILFL), and 237 to 257 (FIWIVLIINVVLLLVSCLLMI).

The protein localises to the cell membrane. This is an uncharacterized protein from Mycoplasma genitalium (strain ATCC 33530 / DSM 19775 / NCTC 10195 / G37) (Mycoplasmoides genitalium).